A 156-amino-acid polypeptide reads, in one-letter code: 6,7-dimethyl-8-ribityllumazine synthase (156 aa).

5-amino-6-(D-ribitylamino)uracil contacts are provided by residues Phe-22, 57–59 (AYE), and 81–83 (TVI). (2S)-2-hydroxy-3-oxobutyl phosphate is bound at residue 86 to 87 (GT). His-89 acts as the Proton donor in catalysis. Residue Phe-114 participates in 5-amino-6-(D-ribitylamino)uracil binding. Arg-128 lines the (2S)-2-hydroxy-3-oxobutyl phosphate pocket.

It belongs to the DMRL synthase family. As to quaternary structure, forms an icosahedral capsid composed of 60 subunits, arranged as a dodecamer of pentamers.

It carries out the reaction (2S)-2-hydroxy-3-oxobutyl phosphate + 5-amino-6-(D-ribitylamino)uracil = 6,7-dimethyl-8-(1-D-ribityl)lumazine + phosphate + 2 H2O + H(+). Its pathway is cofactor biosynthesis; riboflavin biosynthesis; riboflavin from 2-hydroxy-3-oxobutyl phosphate and 5-amino-6-(D-ribitylamino)uracil: step 1/2. Its function is as follows. Catalyzes the formation of 6,7-dimethyl-8-ribityllumazine by condensation of 5-amino-6-(D-ribitylamino)uracil with 3,4-dihydroxy-2-butanone 4-phosphate. This is the penultimate step in the biosynthesis of riboflavin. In Cronobacter sakazakii (strain ATCC BAA-894) (Enterobacter sakazakii), this protein is 6,7-dimethyl-8-ribityllumazine synthase.